A 474-amino-acid chain; its full sequence is Ribulose bisphosphate carboxylase large chain (474 aa).

Asparagine 122 and threonine 172 together coordinate substrate. Lysine 174 serves as the catalytic Proton acceptor. A substrate-binding site is contributed by lysine 176. Mg(2+) is bound by residues lysine 200, aspartate 202, and glutamate 203. At lysine 200 the chain carries N6-carboxylysine. Histidine 293 serves as the catalytic Proton acceptor. Residues arginine 294, histidine 326, and serine 378 each coordinate substrate.

Belongs to the RuBisCO large chain family. Type I subfamily. As to quaternary structure, heterohexadecamer of 8 large chains and 8 small chains; disulfide-linked. The disulfide link is formed within the large subunit homodimers. It depends on Mg(2+) as a cofactor. The disulfide bond which can form in the large chain dimeric partners within the hexadecamer appears to be associated with oxidative stress and protein turnover.

The protein resides in the carboxysome. It carries out the reaction 2 (2R)-3-phosphoglycerate + 2 H(+) = D-ribulose 1,5-bisphosphate + CO2 + H2O. The catalysed reaction is D-ribulose 1,5-bisphosphate + O2 = 2-phosphoglycolate + (2R)-3-phosphoglycerate + 2 H(+). Its function is as follows. RuBisCO catalyzes two reactions: the carboxylation of D-ribulose 1,5-bisphosphate, the primary event in carbon dioxide fixation, as well as the oxidative fragmentation of the pentose substrate in the photorespiration process. Both reactions occur simultaneously and in competition at the same active site. The chain is Ribulose bisphosphate carboxylase large chain from Synechococcus sp. (strain JA-3-3Ab) (Cyanobacteria bacterium Yellowstone A-Prime).